A 528-amino-acid polypeptide reads, in one-letter code: Vacuolar fusion protein MON1 homolog (528 aa).

Over residues 1–16 the composition is skewed to polar residues; it reads MEVEQTSVRSDTNSTC. Residues 1 to 50 form a disordered region; the sequence is MEVEQTSVRSDTNSTCEYLDAEGDPESPNLYQEADPDQEAEQQNHSIISE.

This sequence belongs to the MON1/SAND family. As to quaternary structure, component of the Mon1-Ccz1 guanyl-nucleotide exchange factor complex made up of Mon1, Ccz1 and Bulli; the interaction of Bulli with the Mon1-Ccz1 heterodimer is mediated via the C-terminal Mic1 domain of Bulli. Mon1 and Ccz1 form a stable complex which displays Rab7 GEF activity with or without Bulli; GEF activity is enhanced by Bulli possibly by improving membrane association of the complex. Interacts with Rab5 and Rab7; preferentially binds GTP-bound Rab5 and GDP-bound Rab7.

The protein localises to the cytoplasm. Its subcellular location is the cytosol. With respect to regulation, the Rab7 guanyl-nucleotide exchange factor (GEF) activity of the Mon1-Ccz1 complex is autoinhibited by the N-terminal disordered region of Mon1. GEF activity is stimulated by Rab5-mediated recruitment to membranes. In terms of biological role, part of the Mon1-Ccz1 guanyl-nucleotide exchange factor complex specific for Rab7 that promotes the exchange of GDP to GTP, converting Rab7 from an inactive GDP-bound form into an active GTP-bound form. Plays an important role in membrane trafficking through the secretory apparatus. Required for recruitment of Rab7 to endosomal and autophagosomal membranes to mediate endolysosomal and autolysosomal vesicle maturation. Required for fusion of multivesicular bodies and lysosomes but not their formation or trafficking. Involved in the replacement of Rab5 (and possibly Rab4) with Rab7, also known as Rab conversion or the Rab cascade, during endosomal maturation. The Mon1-Ccz1 complex is recruited to phosphatidylinositol 3-phosphate (PtdIns[3]P) enriched membranes by Rab5, which stimulates recruitment and guanyl-nucleotide exchange of Rab7. Together with Rab7 required for autolysosome formation in fat cells and autophagic degradation during starvation-induced basal and developmental autophagy. Involved in neuromuscular junction (NMJ) presynaptic bouton function and morphogenesis. Together with Rab7, regulates levels of postsynaptic glutamate receptor GluRIIA in the NMJ presynapse. The sequence is that of Vacuolar fusion protein MON1 homolog from Drosophila melanogaster (Fruit fly).